A 336-amino-acid polypeptide reads, in one-letter code: Homoserine dehydrogenase (336 aa).

Position 8 (Phe8) interacts with NADPH. NAD(+) contacts are provided by Ala10, Ile11, and Thr94. NADPH-binding residues include Ile11, Thr94, and Lys123. Residues Ile11, Thr94, and Lys123 each coordinate NADP(+). Residues Glu147, Val150, and Gly152 each contribute to the Na(+) site. Positions 205 and 208 each coordinate NADP(+). Positions 208 and 219 each coordinate L-homoserine. Lys223 serves as the catalytic Proton donor. An NADPH-binding site is contributed by Gly315. Residue Gly315 coordinates NAD(+). Gly315 contributes to the NADP(+) binding site.

The protein belongs to the homoserine dehydrogenase family. The cofactor is a metal cation.

It carries out the reaction L-homoserine + NADP(+) = L-aspartate 4-semialdehyde + NADPH + H(+). The catalysed reaction is L-homoserine + NAD(+) = L-aspartate 4-semialdehyde + NADH + H(+). It functions in the pathway amino-acid biosynthesis; L-methionine biosynthesis via de novo pathway; L-homoserine from L-aspartate: step 3/3. The protein operates within amino-acid biosynthesis; L-threonine biosynthesis; L-threonine from L-aspartate: step 3/5. Functionally, catalyzes the conversion of L-aspartate-beta-semialdehyde (L-Asa) to L-homoserine (L-Hse), the third step in the biosynthesis of threonine and methionine from aspartate. The protein is Homoserine dehydrogenase (hom) of Methanocaldococcus jannaschii (strain ATCC 43067 / DSM 2661 / JAL-1 / JCM 10045 / NBRC 100440) (Methanococcus jannaschii).